The following is a 60-amino-acid chain: Large ribosomal subunit protein uL29 (60 aa).

This sequence belongs to the universal ribosomal protein uL29 family.

The sequence is that of Large ribosomal subunit protein uL29 from Fusobacterium nucleatum subsp. nucleatum (strain ATCC 25586 / DSM 15643 / BCRC 10681 / CIP 101130 / JCM 8532 / KCTC 2640 / LMG 13131 / VPI 4355).